The chain runs to 79 residues: Acyl carrier protein (79 aa).

In terms of domain architecture, Carrier spans 2 to 77 (SEIGERVKKI…DATKFLEKNA (76 aa)). Residue Ser37 is modified to O-(pantetheine 4'-phosphoryl)serine.

This sequence belongs to the acyl carrier protein (ACP) family. 4'-phosphopantetheine is transferred from CoA to a specific serine of apo-ACP by AcpS. This modification is essential for activity because fatty acids are bound in thioester linkage to the sulfhydryl of the prosthetic group.

Its subcellular location is the cytoplasm. Its pathway is lipid metabolism; fatty acid biosynthesis. In terms of biological role, carrier of the growing fatty acid chain in fatty acid biosynthesis. The chain is Acyl carrier protein from Nitrobacter winogradskyi (strain ATCC 25391 / DSM 10237 / CIP 104748 / NCIMB 11846 / Nb-255).